Consider the following 113-residue polypeptide: Large ribosomal subunit protein bL19 (113 aa).

This sequence belongs to the bacterial ribosomal protein bL19 family.

In terms of biological role, this protein is located at the 30S-50S ribosomal subunit interface and may play a role in the structure and function of the aminoacyl-tRNA binding site. The protein is Large ribosomal subunit protein bL19 of Rhodococcus jostii (strain RHA1).